The sequence spans 642 residues: Protein BZZ1 (642 aa).

In terms of domain architecture, F-BAR spans 6-272 (YKFSDELHDD…EIAKNEPVLD (267 aa)). Residues 113–190 (LDIAEKLKKL…QRNLKLSESD (78 aa)) are a coiled coil. The Phorbol-ester/DAG-type zinc-finger motif lies at 397-447 (FHDFKHVSFKLPTSCSYCREIIWGLSKRGCVCKNCGFKCHARCELLVPANC). 2 SH3 domains span residues 515 to 575 (ASKV…LNDE) and 584 to 642 (GDSS…VTDV).

The protein belongs to the BZZ1 family.

It is found in the cell tip. It localises to the cytoplasm. Its subcellular location is the cytoskeleton. The protein resides in the actin patch. Its function is as follows. Plays a role in endocytosis and trafficking to the vacuole. Functions with type I myosins to restore polarity of the actin cytoskeleton after NaCl stress. The sequence is that of Protein BZZ1 (bzz1) from Schizosaccharomyces pombe (strain 972 / ATCC 24843) (Fission yeast).